Reading from the N-terminus, the 88-residue chain is Cell division topological specificity factor (88 aa).

It belongs to the MinE family.

Functionally, prevents the cell division inhibition by proteins MinC and MinD at internal division sites while permitting inhibition at polar sites. This ensures cell division at the proper site by restricting the formation of a division septum at the midpoint of the long axis of the cell. This Aeromonas salmonicida (strain A449) protein is Cell division topological specificity factor.